Consider the following 97-residue polypeptide: Aspartyl/glutamyl-tRNA(Asn/Gln) amidotransferase subunit C (97 aa).

It belongs to the GatC family. As to quaternary structure, heterotrimer of A, B and C subunits.

It carries out the reaction L-glutamyl-tRNA(Gln) + L-glutamine + ATP + H2O = L-glutaminyl-tRNA(Gln) + L-glutamate + ADP + phosphate + H(+). The catalysed reaction is L-aspartyl-tRNA(Asn) + L-glutamine + ATP + H2O = L-asparaginyl-tRNA(Asn) + L-glutamate + ADP + phosphate + 2 H(+). In terms of biological role, allows the formation of correctly charged Asn-tRNA(Asn) or Gln-tRNA(Gln) through the transamidation of misacylated Asp-tRNA(Asn) or Glu-tRNA(Gln) in organisms which lack either or both of asparaginyl-tRNA or glutaminyl-tRNA synthetases. The reaction takes place in the presence of glutamine and ATP through an activated phospho-Asp-tRNA(Asn) or phospho-Glu-tRNA(Gln). The sequence is that of Aspartyl/glutamyl-tRNA(Asn/Gln) amidotransferase subunit C from Prochlorococcus marinus subsp. pastoris (strain CCMP1986 / NIES-2087 / MED4).